The chain runs to 640 residues: Chaperone protein HtpG (640 aa).

The tract at residues 1–343 (MQTAENIEHL…SSDLPLNVSR (343 aa)) is a; substrate-binding. The b stretch occupies residues 344 to 564 (EILQESKDID…THDVSGNLGR (221 aa)). The tract at residues 565–640 (LLKSAGQKVP…LLLQNILSGK (76 aa)) is c.

The protein belongs to the heat shock protein 90 family. In terms of assembly, homodimer.

The protein localises to the cytoplasm. In terms of biological role, molecular chaperone. Has ATPase activity. The protein is Chaperone protein HtpG of Nitrosomonas europaea (strain ATCC 19718 / CIP 103999 / KCTC 2705 / NBRC 14298).